A 144-amino-acid polypeptide reads, in one-letter code: MRLNTLSPAAGAKSAKKRVGRGIGSGLGKTGGRGVKGAGSRSGGGVRAGFEGGQMPLKIRMPKFGFYSRKGAVTAEVRLSEVAKVEGDVVDLNTLKQAGVITKGMQFAKIVLSGNIDRAVTVRGVSVTKGARAAIEAAGGKIEE.

Positions 1–50 are disordered; the sequence is MRLNTLSPAAGAKSAKKRVGRGIGSGLGKTGGRGVKGAGSRSGGGVRAGF. The span at 21–50 shows a compositional bias: gly residues; sequence RGIGSGLGKTGGRGVKGAGSRSGGGVRAGF.

This sequence belongs to the universal ribosomal protein uL15 family. Part of the 50S ribosomal subunit.

Its function is as follows. Binds to the 23S rRNA. The chain is Large ribosomal subunit protein uL15 from Tolumonas auensis (strain DSM 9187 / NBRC 110442 / TA 4).